Consider the following 418-residue polypeptide: UDP-N-acetylglucosamine 1-carboxyvinyltransferase (418 aa).

Position 22–23 (22–23 (KN)) interacts with phosphoenolpyruvate. Arginine 93 lines the UDP-N-acetyl-alpha-D-glucosamine pocket. The active-site Proton donor is cysteine 117. Cysteine 117 is modified (2-(S-cysteinyl)pyruvic acid O-phosphothioketal). UDP-N-acetyl-alpha-D-glucosamine-binding positions include 122 to 126 (RPIDL), aspartate 306, and leucine 328.

Belongs to the EPSP synthase family. MurA subfamily.

Its subcellular location is the cytoplasm. It carries out the reaction phosphoenolpyruvate + UDP-N-acetyl-alpha-D-glucosamine = UDP-N-acetyl-3-O-(1-carboxyvinyl)-alpha-D-glucosamine + phosphate. It participates in cell wall biogenesis; peptidoglycan biosynthesis. Cell wall formation. Adds enolpyruvyl to UDP-N-acetylglucosamine. The chain is UDP-N-acetylglucosamine 1-carboxyvinyltransferase from Campylobacter hominis (strain ATCC BAA-381 / DSM 21671 / CCUG 45161 / LMG 19568 / NCTC 13146 / CH001A).